The primary structure comprises 244 residues: Flavin-dependent thymidylate synthase (244 aa).

The ThyX domain occupies 2-207 (VRVTLVNYTK…DIRPIIKWAK (206 aa)). FAD contacts are provided by residues Ser56, 80-82 (RHR), and Gln88. DUMP is bound by residues 77 to 80 (QLVR), 88 to 92 (QQSQR), and Arg146. Residues 80-90 (RHRIASYTQQS) carry the ThyX motif motif. FAD-binding positions include 162 to 164 (NLR) and His168. A dUMP-binding site is contributed by Arg173. Arg173 (involved in ionization of N3 of dUMP, leading to its activation) is an active-site residue.

Belongs to the thymidylate synthase ThyX family. In terms of assembly, homotetramer. FAD is required as a cofactor.

It carries out the reaction dUMP + (6R)-5,10-methylene-5,6,7,8-tetrahydrofolate + NADPH + H(+) = dTMP + (6S)-5,6,7,8-tetrahydrofolate + NADP(+). It participates in pyrimidine metabolism; dTTP biosynthesis. Catalyzes the reductive methylation of 2'-deoxyuridine-5'-monophosphate (dUMP) to 2'-deoxythymidine-5'-monophosphate (dTMP) while utilizing 5,10-methylenetetrahydrofolate (mTHF) as the methyl donor, and NADPH and FADH(2) as the reductant. In Pyrococcus furiosus (strain ATCC 43587 / DSM 3638 / JCM 8422 / Vc1), this protein is Flavin-dependent thymidylate synthase.